A 336-amino-acid polypeptide reads, in one-letter code: Transcription initiation factor IIB (336 aa).

The TFIIB-type zinc finger occupies 41-72 (QKLRCPICGNTVFIEDAERGQIVCASCGYVLM). Residues C45, C48, C64, and C67 each coordinate Zn(2+). Tandem repeats lie at residues 152–235 (HELN…AREL) and 246–327 (QYVP…ELAK).

Belongs to the TFIIB family.

Its function is as follows. Stabilizes TBP binding to an archaeal box-A promoter. Also responsible for recruiting RNA polymerase II to the pre-initiation complex (DNA-TBP-TFIIB). This Caldivirga maquilingensis (strain ATCC 700844 / DSM 13496 / JCM 10307 / IC-167) protein is Transcription initiation factor IIB.